The chain runs to 486 residues: Flavin-dependent monooxygenase pboD (486 aa).

Residues D51, G65, and R124 each coordinate FAD. R203 is a catalytic residue. Residues D344 and G357 each contribute to the FAD site.

It belongs to the paxM FAD-dependent monooxygenase family. Requires FAD as cofactor.

It functions in the pathway secondary metabolite biosynthesis. In terms of biological role, flavin-dependent monooxygenase; part of the gene cluster that mediates the biosynthesis of protubonine B, a hydroxylated and diacetylated cyclo-L-Trp-L-Leu derivative. Within the pathway, pboD catalyzes the hydroxylation at C-3 of the indole ring of cyclo-L-Trp-L-Leu and subsequent formation of the pyrrolidine ring, eading to the production of protubonine D. PboD is also able to accept other cyclodipeptides (CDPs) as substrates, including cyclo-L-Trp-L-Trp, cyclo-L-Trp-L-Tyr, cyclo-L-Trp-L-Phe, cyclo-L-Trp-L-Met, cyclo-L-Trp-L-Ala, cyclo-L-Trp-L-Pro and cyclo-L-Trp-Gly. Assays with cyclo-L-Trp-L-Trp, cyclo-L-Trp-L-Tyr, cyclo-L-Trp-L-Phe show similar or even slightly higher conversion yields, compared with that of the natural substrate cyclo-L-Trp-L-Leu, whereas cyclo-L-Trp-L-Pro and cyclo-L-Trp-Gly are accepted by PboD but only with conversion yields of 10 and 4%, respectively. Cyclo-L-Trp-L-His is not accepted as a substrate. The first step of the protubonine B synthesis is performed by the nonribosomal peptide synthetase pboA that catalyzes the formation of cyclo-L-Trp-L-Leu by condensing L-Leu with L-Trp. The flavin-dependent monooxygenase pboD is responsible for hydroxylation at C-3 of the indole ring and subsequent formation of the pyrrolidine ring, leadind to protubonine D. Protubonine D is further diacetylated by two acetyltransferases, pboB and pboC, to form the final product protubonine B via protubonine C. The protein is Flavin-dependent monooxygenase pboD of Aspergillus ustus.